We begin with the raw amino-acid sequence, 275 residues long: Ribosomal RNA small subunit methyltransferase A (275 aa).

S-adenosyl-L-methionine is bound by residues Asn21, Leu23, Gly48, Glu69, Asp94, and Asn115.

Belongs to the class I-like SAM-binding methyltransferase superfamily. rRNA adenine N(6)-methyltransferase family. RsmA subfamily.

It localises to the cytoplasm. The catalysed reaction is adenosine(1518)/adenosine(1519) in 16S rRNA + 4 S-adenosyl-L-methionine = N(6)-dimethyladenosine(1518)/N(6)-dimethyladenosine(1519) in 16S rRNA + 4 S-adenosyl-L-homocysteine + 4 H(+). In terms of biological role, specifically dimethylates two adjacent adenosines (A1518 and A1519) in the loop of a conserved hairpin near the 3'-end of 16S rRNA in the 30S particle. May play a critical role in biogenesis of 30S subunits. This chain is Ribosomal RNA small subunit methyltransferase A, found in Clostridium botulinum (strain Kyoto / Type A2).